We begin with the raw amino-acid sequence, 387 residues long: tRNA pseudouridine synthase B (387 aa).

Aspartate 43 acts as the Nucleophile in catalysis.

It belongs to the pseudouridine synthase TruB family. Type 1 subfamily.

It catalyses the reaction uridine(55) in tRNA = pseudouridine(55) in tRNA. In terms of biological role, responsible for synthesis of pseudouridine from uracil-55 in the psi GC loop of transfer RNAs. The protein is tRNA pseudouridine synthase B of Bifidobacterium longum subsp. infantis (strain ATCC 15697 / DSM 20088 / JCM 1222 / NCTC 11817 / S12).